Here is a 369-residue protein sequence, read N- to C-terminus: Endophilin-A (369 aa).

The region spanning T18–S248 is the BAR domain. The stretch at Q227–E247 forms a coiled coil. Residues G266–A295 are disordered. Low complexity predominate over residues P277–P294. In terms of domain architecture, SH3 spans Q305–P364.

It belongs to the endophilin family.

It is found in the cytoplasm. Its subcellular location is the membrane. In terms of biological role, required presynaptically at the neuromuscular junction. Implicated in synaptic vesicle endocytosis. This is Endophilin-A from Drosophila erecta (Fruit fly).